The chain runs to 214 residues: Large ribosomal subunit protein uL3 (214 aa).

The interval 133–155 (ATHGNSRSHRVPGSTGQCQSPGR) is disordered. Glutamine 151 carries the post-translational modification N5-methylglutamine.

It belongs to the universal ribosomal protein uL3 family. As to quaternary structure, part of the 50S ribosomal subunit. Forms a cluster with proteins L14 and L19. Methylated by PrmB.

Its function is as follows. One of the primary rRNA binding proteins, it binds directly near the 3'-end of the 23S rRNA, where it nucleates assembly of the 50S subunit. This chain is Large ribosomal subunit protein uL3, found in Cellvibrio japonicus (strain Ueda107) (Pseudomonas fluorescens subsp. cellulosa).